The following is a 531-amino-acid chain: Pescadillo homolog (531 aa).

In terms of domain architecture, BRCT spans 309–398 (SIKTMFKGCV…RKLPTERYMP (90 aa)).

The protein belongs to the pescadillo family.

It localises to the nucleus. The protein resides in the nucleolus. Its subcellular location is the nucleoplasm. Its function is as follows. Required for maturation of ribosomal RNAs and formation of the large ribosomal subunit. The polypeptide is Pescadillo homolog (Caenorhabditis elegans).